The chain runs to 207 residues: ATP-dependent Clp protease proteolytic subunit (207 aa).

Ser-112 (nucleophile) is an active-site residue. His-137 is a catalytic residue.

Belongs to the peptidase S14 family. Fourteen ClpP subunits assemble into 2 heptameric rings which stack back to back to give a disk-like structure with a central cavity, resembling the structure of eukaryotic proteasomes.

The protein localises to the cytoplasm. The enzyme catalyses Hydrolysis of proteins to small peptides in the presence of ATP and magnesium. alpha-casein is the usual test substrate. In the absence of ATP, only oligopeptides shorter than five residues are hydrolyzed (such as succinyl-Leu-Tyr-|-NHMec, and Leu-Tyr-Leu-|-Tyr-Trp, in which cleavage of the -Tyr-|-Leu- and -Tyr-|-Trp bonds also occurs).. Cleaves peptides in various proteins in a process that requires ATP hydrolysis. Has a chymotrypsin-like activity. Plays a major role in the degradation of misfolded proteins. In Bacteroides fragilis (strain ATCC 25285 / DSM 2151 / CCUG 4856 / JCM 11019 / LMG 10263 / NCTC 9343 / Onslow / VPI 2553 / EN-2), this protein is ATP-dependent Clp protease proteolytic subunit.